Consider the following 157-residue polypeptide: 17.8 kDa class I heat shock protein (157 aa).

The 115-residue stretch at 43–157 folds into the sHSP domain; it reads ETAAFVNTHI…PEVKAIDISG (115 aa).

It belongs to the small heat shock protein (HSP20) family. Forms oligomeric structures.

The protein resides in the cytoplasm. This is 17.8 kDa class I heat shock protein from Daucus carota (Wild carrot).